The chain runs to 211 residues: Redox-sensing transcriptional repressor Rex (211 aa).

The segment at residues 13–52 is a DNA-binding region (H-T-H motif); it reads TYLRILEELEAQGVHRTSSEQLGELAQVTAFQVRKDLSYF. 87-92 contacts NAD(+); that stretch reads GMGRLG.

The protein belongs to the transcriptional regulatory Rex family. As to quaternary structure, homodimer.

The protein resides in the cytoplasm. Functionally, modulates transcription in response to changes in cellular NADH/NAD(+) redox state. This is Redox-sensing transcriptional repressor Rex from Thermus aquaticus.